The sequence spans 262 residues: Type III pantothenate kinase (262 aa).

7 to 14 (DIGNTRLK) lines the ATP pocket. Substrate is bound by residues tyrosine 96 and 103–106 (GSDR). Aspartate 105 functions as the Proton acceptor in the catalytic mechanism. Threonine 137 is an ATP binding site. Threonine 187 lines the substrate pocket.

The protein belongs to the type III pantothenate kinase family. Homodimer. The cofactor is NH4(+). It depends on K(+) as a cofactor.

The protein resides in the cytoplasm. It carries out the reaction (R)-pantothenate + ATP = (R)-4'-phosphopantothenate + ADP + H(+). Its pathway is cofactor biosynthesis; coenzyme A biosynthesis; CoA from (R)-pantothenate: step 1/5. Functionally, catalyzes the phosphorylation of pantothenate (Pan), the first step in CoA biosynthesis. The chain is Type III pantothenate kinase from Leptothrix cholodnii (strain ATCC 51168 / LMG 8142 / SP-6) (Leptothrix discophora (strain SP-6)).